Here is a 576-residue protein sequence, read N- to C-terminus: Arginine--tRNA ligase (576 aa).

The 'HIGH' region signature appears at 132 to 142 (ANPTGPMHIGH).

It belongs to the class-I aminoacyl-tRNA synthetase family. In terms of assembly, monomer.

It is found in the cytoplasm. It carries out the reaction tRNA(Arg) + L-arginine + ATP = L-arginyl-tRNA(Arg) + AMP + diphosphate. The polypeptide is Arginine--tRNA ligase (Ehrlichia ruminantium (strain Gardel)).